The sequence spans 677 residues: UvrABC system protein B (677 aa).

The region spanning 26-414 is the Helicase ATP-binding domain; that stretch reads DNLDAGLAHQ…SGNEVVEQVV (389 aa). An ATP-binding site is contributed by 39–46; it reads GVTGSGKT. The Beta-hairpin signature appears at 92 to 115; sequence YYDYYQPEAYVPTTDTFIEKDASI. In terms of domain architecture, Helicase C-terminal spans 432–598; sequence QVDDLMSEIR…GLNKDITDVM (167 aa). Positions 637–672 constitute a UVR domain; sequence MKEIDAKEKEMYKAAQNLEFEQAGKLRDEVAELREQ.

The protein belongs to the UvrB family. Forms a heterotetramer with UvrA during the search for lesions. Interacts with UvrC in an incision complex.

It localises to the cytoplasm. The UvrABC repair system catalyzes the recognition and processing of DNA lesions. A damage recognition complex composed of 2 UvrA and 2 UvrB subunits scans DNA for abnormalities. Upon binding of the UvrA(2)B(2) complex to a putative damaged site, the DNA wraps around one UvrB monomer. DNA wrap is dependent on ATP binding by UvrB and probably causes local melting of the DNA helix, facilitating insertion of UvrB beta-hairpin between the DNA strands. Then UvrB probes one DNA strand for the presence of a lesion. If a lesion is found the UvrA subunits dissociate and the UvrB-DNA preincision complex is formed. This complex is subsequently bound by UvrC and the second UvrB is released. If no lesion is found, the DNA wraps around the other UvrB subunit that will check the other stand for damage. This is UvrABC system protein B from Idiomarina loihiensis (strain ATCC BAA-735 / DSM 15497 / L2-TR).